The chain runs to 291 residues: Pyridoxal 5'-phosphate synthase subunit PdxS (291 aa).

Asp-23 is a D-ribose 5-phosphate binding site. The Schiff-base intermediate with D-ribose 5-phosphate role is filled by Lys-80. Gly-152 contacts D-ribose 5-phosphate. Arg-164 serves as a coordination point for D-glyceraldehyde 3-phosphate. Residues Gly-213 and 234-235 (GS) each bind D-ribose 5-phosphate.

It belongs to the PdxS/SNZ family. In terms of assembly, in the presence of PdxT, forms a dodecamer of heterodimers.

The enzyme catalyses aldehydo-D-ribose 5-phosphate + D-glyceraldehyde 3-phosphate + L-glutamine = pyridoxal 5'-phosphate + L-glutamate + phosphate + 3 H2O + H(+). It functions in the pathway cofactor biosynthesis; pyridoxal 5'-phosphate biosynthesis. In terms of biological role, catalyzes the formation of pyridoxal 5'-phosphate from ribose 5-phosphate (RBP), glyceraldehyde 3-phosphate (G3P) and ammonia. The ammonia is provided by the PdxT subunit. Can also use ribulose 5-phosphate and dihydroxyacetone phosphate as substrates, resulting from enzyme-catalyzed isomerization of RBP and G3P, respectively. This chain is Pyridoxal 5'-phosphate synthase subunit PdxS, found in Haemophilus influenzae (strain ATCC 51907 / DSM 11121 / KW20 / Rd).